Here is a 443-residue protein sequence, read N- to C-terminus: C4-dicarboxylate transport protein (443 aa).

The next 9 helical transmembrane spans lie at 17–37, 57–77, 92–112, 139–159, 161–181, 201–221, 234–254, 320–340, and 368–388; these read PFYS…ILLG, LVKM…IAGM, LYFL…ANVV, EQSI…GAFA, GDIL…AMVG, LVGI…AFTI, MLIG…LGAV, IYMT…LSWG, and AATL…ILGI.

The protein belongs to the dicarboxylate/amino acid:cation symporter (DAACS) (TC 2.A.23) family.

The protein resides in the cell inner membrane. Responsible for the transport of dicarboxylates such as succinate, fumarate, and malate from the periplasm across the membrane. The polypeptide is C4-dicarboxylate transport protein (Rhizobium etli (strain ATCC 51251 / DSM 11541 / JCM 21823 / NBRC 15573 / CFN 42)).